Reading from the N-terminus, the 133-residue chain is MRHRVSGRHFGRTANQRKALLRGLLASLIKYERIETTVAKAKAVKELADRLVTFGKKGDLHSRRIALSYLPDRELVKKLFNEIAPRFSDRNGGYVRVIKTGFRIKDSAPKAILEFVDYAKPEKESDKEEKKAN.

It belongs to the bacterial ribosomal protein bL17 family. Part of the 50S ribosomal subunit. Contacts protein L32.

The chain is Large ribosomal subunit protein bL17 from Thermodesulfovibrio yellowstonii (strain ATCC 51303 / DSM 11347 / YP87).